Consider the following 168-residue polypeptide: Nuclear cap-binding protein subunit 2 (168 aa).

Residues Y23, Y46, 115 to 119, 126 to 130, and 136 to 137 contribute to the mRNA site; these read RTDWD, RQYGR, and QV. One can recognise an RRM domain in the interval 43–121; sequence STLYVGNLSF…RIVRTDWDAG (79 aa).

Belongs to the RRM NCBP2 family. As to quaternary structure, component of the nuclear cap-binding complex (CBC), a heterodimer composed of NCBP1/CBP80 and NCBP2/CBP20 that interacts with m7GpppG-capped RNA.

Its subcellular location is the nucleus. The protein resides in the cytoplasm. Component of the cap-binding complex (CBC), which binds co-transcriptionally to the 5' cap of pre-mRNAs and is involved in various processes such as pre-mRNA splicing, translation regulation, nonsense-mediated mRNA decay, RNA-mediated gene silencing (RNAi) by microRNAs (miRNAs) and mRNA export. The CBC complex is involved in mRNA export from the nucleus, leading to the recruitment of the mRNA export machinery to the 5' end of mRNA and to mRNA export in a 5' to 3' direction through the nuclear pore. The CBC complex is also involved in mediating U snRNA and intronless mRNAs export from the nucleus. The CBC complex is essential for a pioneer round of mRNA translation, before steady state translation when the CBC complex is replaced by cytoplasmic cap-binding protein eIF4E. The pioneer round of mRNA translation mediated by the CBC complex plays a central role in nonsense-mediated mRNA decay (NMD), NMD only taking place in mRNAs bound to the CBC complex, but not on eIF4E-bound mRNAs. The CBC complex enhances NMD in mRNAs containing at least one exon-junction complex (EJC), promoting the interaction between UPF1 and UPF2. The CBC complex is also involved in 'failsafe' NMD, which is independent of the EJC complex, while it does not participate in Staufen-mediated mRNA decay (SMD). During cell proliferation, the CBC complex is also involved in microRNAs (miRNAs) biogenesis via its interaction with SRRT/ARS2, thereby being required for miRNA-mediated RNA interference. The CBC complex also acts as a negative regulator of PARN, thereby acting as an inhibitor of mRNA deadenylation. In the CBC complex, NCBP2/CBP20 recognizes and binds capped RNAs (m7GpppG-capped RNA) but requires NCBP1/CBP80 to stabilize the movement of its N-terminal loop and lock the CBC into a high affinity cap-binding state with the cap structure. The conventional cap-binding complex with NCBP2 binds both small nuclear RNA (snRNA) and messenger (mRNA) and is involved in their export from the nucleus. The chain is Nuclear cap-binding protein subunit 2 (NCBP2) from Gallus gallus (Chicken).